We begin with the raw amino-acid sequence, 173 residues long: Transcription factor S-II-related protein (173 aa).

The TFIIS central domain maps to 9 to 129 (ISDKEREIVI…EETLNQMATV (121 aa)). Residues 130 to 170 (EWKPCYACKNTSYHFYQLQTRSADEPMTTFYICKNCMKTYK) form a TFIIS-type zinc finger. Zn(2+) contacts are provided by Cys-134, Cys-137, Cys-162, and Cys-165.

Belongs to the TFS-II family.

The polypeptide is Transcription factor S-II-related protein (Acanthamoeba polyphaga mimivirus (APMV)).